We begin with the raw amino-acid sequence, 256 residues long: Hydroxyacylglutathione hydrolase (256 aa).

Zn(2+) is bound by residues H55, H57, D59, H60, H113, D132, and H170.

It belongs to the metallo-beta-lactamase superfamily. Glyoxalase II family. Monomer. Zn(2+) serves as cofactor.

It catalyses the reaction an S-(2-hydroxyacyl)glutathione + H2O = a 2-hydroxy carboxylate + glutathione + H(+). It functions in the pathway secondary metabolite metabolism; methylglyoxal degradation; (R)-lactate from methylglyoxal: step 2/2. In terms of biological role, thiolesterase that catalyzes the hydrolysis of S-D-lactoyl-glutathione to form glutathione and D-lactic acid. The sequence is that of Hydroxyacylglutathione hydrolase from Methylococcus capsulatus (strain ATCC 33009 / NCIMB 11132 / Bath).